A 450-amino-acid chain; its full sequence is MATQAKRRRVAGPAGSDDDPAPVASFLSWCQRVGLELSPKVAVSRQGTVAGYGMVARESVQPGELLFAVPRAALLSQHTCSISGVLERERGALQSQSGWVPLLLALLHEMQAPASPWSPYFALWPELGRLQHPMFWPEEERRRLLQGTGVPEAVEKDLVNIRSEYYSIVLPFMDAHPDLFSPRVRSLELYRQLVALVMAYSFQEPLEEEEDEKEPNSPLMVPAADILNHLANHNANLEYSPTCLRMVAIQPIPKGHEIFNTYGQMANWQLIHMYGFAEPYPDNTNDTADIQMVTVREAALQGTKVEAERLLLYERWDFLCKLEMVGEEGAFVIGREEVLTEEELATTLKVLCMPAEEFRAFKDQNGWEDDKSEEDSLTITDIPKLKASWRQLLRDSVLLTLQTYATDLKTEQDLLSNKEVYAALSWREQQALQVRYGQKMILHRLLELTR.

The segment covering 1 to 10 (MATQAKRRRV) has biased composition (basic residues). Residues 1-20 (MATQAKRRRVAGPAGSDDDP) are disordered. Positions 39–263 (PKVAVSRQGT…KGHEIFNTYG (225 aa)) constitute an SET domain. The residue at position 40 (K40) is an N6-methylated lysine; by autocatalysis. Residue 50 to 52 (AGY) participates in S-adenosyl-L-methionine binding. W99 contacts substrate. K156 carries the N6-methylated lysine; by autocatalysis modification. Position 200 (Y200) interacts with S-adenosyl-L-methionine. The substrate site is built by S201 and Q203. S-adenosyl-L-methionine-binding positions include 228–229 (NH) and Y274. K349 carries the N6-methylated lysine; by autocatalysis modification.

The protein belongs to the class V-like SAM-binding methyltransferase superfamily. Histone-lysine methyltransferase family. SETD6 subfamily. In terms of assembly, monomer, homodimer and homotrimer; these structures are stabilized in the presence of S-adenosyl-L-methionine (SAM). In terms of processing, automethylated.

It localises to the nucleus. It carries out the reaction L-lysyl-[protein] + S-adenosyl-L-methionine = N(6)-methyl-L-lysyl-[protein] + S-adenosyl-L-homocysteine + H(+). It catalyses the reaction L-lysyl(8)-[histone H2AZ] + S-adenosyl-L-methionine = N(6)-methyl-L-lysyl(8)-[histone H2AZ] + S-adenosyl-L-homocysteine + H(+). Protein-lysine N-methyltransferase. Monomethylates 'Lys-310' of the RELA subunit of NF-kappa-B complex, leading to down-regulation of NF-kappa-B transcription factor activity. Monomethylates 'Lys-8' of H2AZ (H2AZK8me1). Required for the maintenance of embryonic stem cell self-renewal. Methylates PAK4. The protein is N-lysine methyltransferase SETD6 (SETD6) of Bos taurus (Bovine).